We begin with the raw amino-acid sequence, 1210 residues long: Ice nucleation protein (1210 aa).

An octapeptide periodicity region spans residues 165–1156 (AVYGSTLTGA…LSGGENSTLI (992 aa)).

It belongs to the bacterial ice nucleation protein family.

It is found in the cell outer membrane. Ice nucleation proteins enable bacteria to nucleate crystallization in supercooled water. The polypeptide is Ice nucleation protein (inaW) (Pseudomonas fluorescens).